The chain runs to 198 residues: Protein hunchback (198 aa).

2 disordered regions span residues 16-111 and 152-198; these read SHHH…LPGL and NDKL…KYMA. The segment covering 17–31 has biased composition (basic residues); sequence HHHHHHHAHHSHHQH. Composition is skewed to low complexity over residues 35 to 46 and 56 to 83; these read SNSNSNASSPHQ and SNTNLQLEQYLKQQQQQQQQQQQQQQQQ. Polar residues predominate over residues 95–105; that stretch reads PSPSNNDQNSP. The segment covering 179 to 198 has biased composition (basic and acidic residues); sequence EPEKEHDLMSNSSEDMKYMA.

Belongs to the hunchback C2H2-type zinc-finger protein family.

The protein resides in the nucleus. In terms of biological role, gap class segmentation protein that controls development of head structures. The polypeptide is Protein hunchback (hb) (Drosophila lineosetae (Fruit fly)).